The following is a 179-amino-acid chain: Adenine phosphoribosyltransferase (179 aa).

This sequence belongs to the purine/pyrimidine phosphoribosyltransferase family. As to quaternary structure, homodimer.

It is found in the cytoplasm. It catalyses the reaction AMP + diphosphate = 5-phospho-alpha-D-ribose 1-diphosphate + adenine. It functions in the pathway purine metabolism; AMP biosynthesis via salvage pathway; AMP from adenine: step 1/1. Functionally, catalyzes a salvage reaction resulting in the formation of AMP, that is energically less costly than de novo synthesis. The protein is Adenine phosphoribosyltransferase of Histophilus somni (strain 129Pt) (Haemophilus somnus).